The following is a 244-amino-acid chain: Transcriptional activator protein anr (244 aa).

Ala21–Asp149 serves as a coordination point for a nucleoside 3',5'-cyclic phosphate. The region spanning Lys159–Ile232 is the HTH crp-type domain. The segment at residues Arg192 to Thr211 is a DNA-binding region (H-T-H motif).

Its function is as follows. Transcriptional activator of anaerobic gene expression. The chain is Transcriptional activator protein anr (anr) from Pseudomonas aeruginosa (strain ATCC 15692 / DSM 22644 / CIP 104116 / JCM 14847 / LMG 12228 / 1C / PRS 101 / PAO1).